Here is a 129-residue protein sequence, read N- to C-terminus: Small ribosomal subunit protein uS8 (129 aa).

This sequence belongs to the universal ribosomal protein uS8 family. Part of the 30S ribosomal subunit. Contacts proteins S5 and S12.

Its function is as follows. One of the primary rRNA binding proteins, it binds directly to 16S rRNA central domain where it helps coordinate assembly of the platform of the 30S subunit. This Mycoplasma mycoides subsp. mycoides SC (strain CCUG 32753 / NCTC 10114 / PG1) protein is Small ribosomal subunit protein uS8.